Here is a 370-residue protein sequence, read N- to C-terminus: 4-hydroxy-3-methylbut-2-en-1-yl diphosphate synthase (flavodoxin) (370 aa).

Residues Cys-268, Cys-271, Cys-303, and Glu-310 each contribute to the [4Fe-4S] cluster site.

It belongs to the IspG family. [4Fe-4S] cluster serves as cofactor.

The enzyme catalyses (2E)-4-hydroxy-3-methylbut-2-enyl diphosphate + oxidized [flavodoxin] + H2O + 2 H(+) = 2-C-methyl-D-erythritol 2,4-cyclic diphosphate + reduced [flavodoxin]. Its pathway is isoprenoid biosynthesis; isopentenyl diphosphate biosynthesis via DXP pathway; isopentenyl diphosphate from 1-deoxy-D-xylulose 5-phosphate: step 5/6. Its function is as follows. Converts 2C-methyl-D-erythritol 2,4-cyclodiphosphate (ME-2,4cPP) into 1-hydroxy-2-methyl-2-(E)-butenyl 4-diphosphate. In Bacillus pumilus (strain SAFR-032), this protein is 4-hydroxy-3-methylbut-2-en-1-yl diphosphate synthase (flavodoxin).